The following is a 305-amino-acid chain: Sulfate adenylyltransferase subunit 2 (305 aa).

Belongs to the PAPS reductase family. CysD subfamily. Heterodimer composed of CysD, the smaller subunit, and CysN.

It carries out the reaction sulfate + ATP + H(+) = adenosine 5'-phosphosulfate + diphosphate. It participates in sulfur metabolism; hydrogen sulfide biosynthesis; sulfite from sulfate: step 1/3. Functionally, with CysN forms the ATP sulfurylase (ATPS) that catalyzes the adenylation of sulfate producing adenosine 5'-phosphosulfate (APS) and diphosphate, the first enzymatic step in sulfur assimilation pathway. APS synthesis involves the formation of a high-energy phosphoric-sulfuric acid anhydride bond driven by GTP hydrolysis by CysN coupled to ATP hydrolysis by CysD. The chain is Sulfate adenylyltransferase subunit 2 from Pseudomonas syringae pv. tomato (strain ATCC BAA-871 / DC3000).